Reading from the N-terminus, the 181-residue chain is ADP-ribosylation factor 1 (181 aa).

G2 is lipidated: N-myristoyl glycine. GTP is bound by residues 25-32, T48, G70, 126-129, and 160-161; these read LDGAGKTT, NKQD, and AT. Residue K127 forms a Glycyl lysine isopeptide (Lys-Gly) (interchain with G-Cter in ubiquitin) linkage.

Belongs to the small GTPase superfamily. Arf family. In terms of assembly, interacts with RUD3. Interacts with VPS13 (via C-terminal part); the interaction is direct.

The protein resides in the golgi apparatus. It catalyses the reaction GTP + H2O = GDP + phosphate + H(+). Functionally, GTP-binding protein involved in Golgi vesicle trafficking. May modulate vesicle budding and uncoating within the Golgi apparatus. May recruit the lipid transfer protein VPS13 to Golgi membranes. Recruits polyadenylate-binding protein PAB1 to COPI vesicles, and this is required for correct localization of the asymmetrically distributed ASH1 mRNA. This Saccharomyces cerevisiae (strain ATCC 204508 / S288c) (Baker's yeast) protein is ADP-ribosylation factor 1 (ARF1).